Reading from the N-terminus, the 276-residue chain is Glutamate racemase (276 aa).

Residues aspartate 10 to serine 11 and tyrosine 42 to glycine 43 contribute to the substrate site. Cysteine 73 functions as the Proton donor/acceptor in the catalytic mechanism. Asparagine 74–serine 75 lines the substrate pocket. Catalysis depends on cysteine 183, which acts as the Proton donor/acceptor. Substrate is bound at residue threonine 184 to histidine 185.

This sequence belongs to the aspartate/glutamate racemases family.

It catalyses the reaction L-glutamate = D-glutamate. Its pathway is cell wall biogenesis; peptidoglycan biosynthesis. Functionally, provides the (R)-glutamate required for cell wall biosynthesis. This chain is Glutamate racemase, found in Parafrankia sp. (strain EAN1pec).